Here is an 844-residue protein sequence, read N- to C-terminus: Lysine-specific histone demethylase 1 homolog 1 (844 aa).

Residues 1–18 (MSTETKETRPETKPEDLG) are compositionally biased toward basic and acidic residues. A disordered region spans residues 1 to 131 (MSTETKETRP…PGPRARKRRR (131 aa)). Residues 26–40 (PGEEPLGELIADDVN) are compositionally biased toward acidic residues. Polar residues-rich tracts occupy residues 46 to 62 (ASAT…QSEQ) and 107 to 118 (DLVTEQQSQNPN). The SWIRM domain maps to 154–255 (GKEVDSEALI…FGLAPVIKEA (102 aa)). FAD contacts are provided by Glu-295, Arg-297, and Arg-303. Positions 516 to 523 (LKKGSIEF) match the Nuclear localization signal motif. Glu-679 is a binding site for FAD.

It belongs to the flavin monoamine oxidase family. As to quaternary structure, interacts with CZS. Interacts with OTU6/OTLD1. FAD is required as a cofactor. As to expression, expressed in the shoot and root apical regions of young seedlings. Expressed in cotyledons and inflorescences.

It localises to the nucleus. The protein resides in the cytoplasm. In terms of biological role, probable histone demethylase that reduces the levels of histone H3 'Lys-4' methylation in chromatin of the floral repressor FLOWERING LOCUS C (FLC) and the sporophytically silenced floral repressor FWA. Seems to act in partial redundancy with FLOWERING LOCUS D (FLD) to repress FLC expression. Required for cytosine methylation of FWA. Controls primary seed dormancy by regulating DOG1 and abscisic acid signaling-related genes. In association with OTU6/OTLD1, involved in transcriptional gene repression via histone deubiquitination and demethylation. In Arabidopsis thaliana (Mouse-ear cress), this protein is Lysine-specific histone demethylase 1 homolog 1.